The following is a 142-amino-acid chain: MYSKTIPAMLAIITVAYLCALPHAHARSTQGYGRMDRILAALKTSPMEPSAALAVENGTTHPLEKRQIYDTSCKGVYDRALFNDLEHVCDDCYNLYRTSYVASACRSNCYSNLVFRQCMDDLLMMDEFDQYARKVQMVGRKK.

A signal peptide spans 1-26 (MYSKTIPAMLAIITVAYLCALPHAHA). Position 67 is a pyrrolidone carboxylic acid; partial (glutamine 67). Intrachain disulfides connect cysteine 73–cysteine 109, cysteine 89–cysteine 105, and cysteine 92–cysteine 118. Position 138 is a valine amide (valine 138).

The protein belongs to the arthropod CHH/MIH/GIH/VIH hormone family. The N-terminus is blocked only in isoform CHH-II but not in isoform CHH-I. Produced by the medulla terminalis X-organ in the eyestalks and transported to the sinus gland where they are stored and released.

The protein resides in the secreted. Its function is as follows. Hormone found in the sinus gland of isopods and decapods which controls the blood sugar level. Has a secretagogue action over the amylase released from the midgut gland. May act as a stress hormone and may be involved in the control of molting and reproduction. In Carcinus maenas (Common shore crab), this protein is Crustacean hyperglycemic hormones.